The chain runs to 158 residues: Cystin-1 (158 aa).

Residues 1–146 form a disordered region; sequence MGSGSSRSSR…AAISYDHSEE (146 aa). G2 is lipidated: N-myristoyl glycine. Low complexity-rich tracts occupy residues 19–32 and 39–52; these read ESLPAGPGAAALEG and PVAAAEVPGAAAEE. Residues 29 to 33 carry the Ciliary targeting motif motif; it reads ALEGG. Basic and acidic residues predominate over residues 65–75; that stretch reads DGRDETLRLLD.

In terms of assembly, interacts (when myristoylated) with UNC119 and UNC119B; interaction is required for localization to cilium. As to expression, expressed at high levels in the kidney and pancreas. Moderate expression seen in the skeletal muscle, liver and heart. A weak expression seen in the brain, lung, uterus, prostate, testis, small intestine and colon.

It localises to the cell projection. The protein resides in the cilium membrane. Its subcellular location is the cytoplasm. It is found in the cytoskeleton. The protein localises to the cilium axoneme. This Homo sapiens (Human) protein is Cystin-1 (CYS1).